Consider the following 572-residue polypeptide: Probable serine/threonine-protein kinase At1g54610 (572 aa).

The disordered stretch occupies residues 1–89 (MGCVFGREAA…SNPSKHWRGE (89 aa)). Residues 9-40 (AATTTTAEAKQAKSSKASSGVVVVGESSVTKS) are compositionally biased toward low complexity. Over residues 47–67 (DVEKKKNEEANGDKERKSSKG) the composition is skewed to basic and acidic residues. Polar residues predominate over residues 74–83 (KPNPRLSNPS). A Protein kinase domain is found at 118-402 (FEKIDKIGQG…ASAALKSEFF (285 aa)). ATP is bound by residues 124–132 (IGQGTYSNV) and Lys-147. Asp-242 serves as the catalytic Proton acceptor. Disordered regions lie at residues 409–474 (CEPA…NVDR) and 526–572 (SSFN…AVVA). Residues 419 to 434 (PSKEIDAKRRDEETRR) are compositionally biased toward basic and acidic residues. Positions 554–572 (SRKKKDNTKSSKGKRAVVA) are enriched in basic residues.

Belongs to the protein kinase superfamily. Ser/Thr protein kinase family.

It carries out the reaction L-seryl-[protein] + ATP = O-phospho-L-seryl-[protein] + ADP + H(+). The catalysed reaction is L-threonyl-[protein] + ATP = O-phospho-L-threonyl-[protein] + ADP + H(+). This Arabidopsis thaliana (Mouse-ear cress) protein is Probable serine/threonine-protein kinase At1g54610.